A 268-amino-acid polypeptide reads, in one-letter code: MIETLLEVRNLSKTFRYRTGWFRRQTVEAVKPLSFTLREGQTLAIIGENGSGKSTLAKMLAGMIEPTSGELLIDDHPLHFGDYSFRSQRIRMIFQDPSTSLNPRQRISQILDFPLRLNTDLEPEQRRKQIIETMRMVGLLPDHVSYYPHMLAPGQKQRLGLARALILRPKVIIADEALASLDMSMRSQLINLMLELQEKQGISYIYVTQHIGMMKHISDQVLVMHQGEVVERGSTADVLASPLHELTKRLIAGHFGEALTADAWRKDR.

Positions 6–251 (LEVRNLSKTF…PLHELTKRLI (246 aa)) constitute an ABC transporter domain. 47 to 54 (GENGSGKS) is an ATP binding site.

This sequence belongs to the ABC transporter superfamily.

Its subcellular location is the cell inner membrane. In terms of biological role, involved in a peptide intake transport system that plays a role in the resistance to antimicrobial peptides. This is Peptide transport system ATP-binding protein SapF (sapF) from Escherichia coli O6:H1 (strain CFT073 / ATCC 700928 / UPEC).